The primary structure comprises 278 residues: Protein NIF3 homolog (278 aa).

Belongs to the GTP cyclohydrolase I type 2/NIF3 family.

The sequence is that of Protein NIF3 homolog from Schizosaccharomyces pombe (strain 972 / ATCC 24843) (Fission yeast).